Consider the following 511-residue polypeptide: 2-isopropylmalate synthase (511 aa).

One can recognise a Pyruvate carboxyltransferase domain in the interval 5-267; it reads IQIFDTTLRD…QTQINLEETK (263 aa). Asp14, His202, His204, and Asn238 together coordinate Mn(2+). Positions 391-511 are regulatory domain; the sequence is KVETLQLQFV…NTKVEEGIHS (121 aa).

This sequence belongs to the alpha-IPM synthase/homocitrate synthase family. LeuA type 1 subfamily. As to quaternary structure, homodimer. Mn(2+) serves as cofactor.

Its subcellular location is the cytoplasm. The catalysed reaction is 3-methyl-2-oxobutanoate + acetyl-CoA + H2O = (2S)-2-isopropylmalate + CoA + H(+). It participates in amino-acid biosynthesis; L-leucine biosynthesis; L-leucine from 3-methyl-2-oxobutanoate: step 1/4. In terms of biological role, catalyzes the condensation of the acetyl group of acetyl-CoA with 3-methyl-2-oxobutanoate (2-ketoisovalerate) to form 3-carboxy-3-hydroxy-4-methylpentanoate (2-isopropylmalate). In Staphylococcus saprophyticus subsp. saprophyticus (strain ATCC 15305 / DSM 20229 / NCIMB 8711 / NCTC 7292 / S-41), this protein is 2-isopropylmalate synthase.